The primary structure comprises 127 residues: Large ribosomal subunit protein bL17 (127 aa).

This sequence belongs to the bacterial ribosomal protein bL17 family. In terms of assembly, part of the 50S ribosomal subunit. Contacts protein L32.

This is Large ribosomal subunit protein bL17 from Legionella pneumophila (strain Paris).